A 462-amino-acid chain; its full sequence is GTPase Der (462 aa).

2 EngA-type G domains span residues 2–164 and 198–369; these read QKVI…EEKV and IRVG…KNYT. GTP is bound by residues 8 to 15, 55 to 59, 116 to 119, 204 to 211, 251 to 255, and 315 to 318; these read GKPNVGKS, DSGGL, NKID, GRVNVGKS, DTAGI, and NKWD. In terms of domain architecture, KH-like spans 370 to 454; the sequence is QKIQTSKLNE…PIVLIPKKRG (85 aa).

Belongs to the TRAFAC class TrmE-Era-EngA-EngB-Septin-like GTPase superfamily. EngA (Der) GTPase family. In terms of assembly, associates with the 50S ribosomal subunit.

GTPase that plays an essential role in the late steps of ribosome biogenesis. In Campylobacter concisus (strain 13826), this protein is GTPase Der.